Here is a 161-residue protein sequence, read N- to C-terminus: Small ribosomal subunit protein uS9 (161 aa).

It belongs to the universal ribosomal protein uS9 family.

The polypeptide is Small ribosomal subunit protein uS9 (rpsI) (Rickettsia prowazekii (strain Madrid E)).